The following is a 168-amino-acid chain: Ribosome maturation factor RimM (168 aa).

The region spanning 95 to 168 (KEGDYYWTDL…IIVVEWDADF (74 aa)) is the PRC barrel domain.

The protein belongs to the RimM family. Binds ribosomal protein uS19.

It is found in the cytoplasm. Functionally, an accessory protein needed during the final step in the assembly of 30S ribosomal subunit, possibly for assembly of the head region. Essential for efficient processing of 16S rRNA. May be needed both before and after RbfA during the maturation of 16S rRNA. It has affinity for free ribosomal 30S subunits but not for 70S ribosomes. In Coxiella burnetii (strain CbuK_Q154) (Coxiella burnetii (strain Q154)), this protein is Ribosome maturation factor RimM.